The primary structure comprises 315 residues: Serpentine receptor class delta-31 (315 aa).

Transmembrane regions (helical) follow at residues 6-26 (LHSI…YLAI), 38-58 (AIIT…FFVM), 83-103 (ACYV…IWMI), 124-144 (VFVA…WFSI), 174-194 (ITLI…YIWI), 225-245 (FQVF…SMFT), and 256-276 (AISV…ILFV).

The protein belongs to the nematode receptor-like protein srd family.

It is found in the membrane. This Caenorhabditis elegans protein is Serpentine receptor class delta-31 (srd-31).